Consider the following 496-residue polypeptide: Alpha-amylase (496 aa).

A disulfide bridge connects residues cysteine 29 and cysteine 85. 3 residues coordinate Ca(2+): asparagine 99, arginine 155, and aspartate 164. Arginine 192 provides a ligand contact to chloride. The Nucleophile role is filled by aspartate 194. Histidine 198 is a Ca(2+) binding site. Glutamate 230 functions as the Proton donor in the catalytic mechanism. Arginine 332 is a chloride binding site. 2 cysteine pairs are disulfide-bonded: cysteine 374-cysteine 380 and cysteine 448-cysteine 460.

The protein belongs to the glycosyl hydrolase 13 family. In terms of assembly, monomer. It depends on Ca(2+) as a cofactor. Requires chloride as cofactor. In terms of processing, disulfide bonds are present.

The protein localises to the secreted. The enzyme catalyses Endohydrolysis of (1-&gt;4)-alpha-D-glucosidic linkages in polysaccharides containing three or more (1-&gt;4)-alpha-linked D-glucose units.. Inhibited by alpha-amylase inhibitors from wheat and rye. The most effective inhibitors are the wheat tetrameric alpha-amylase inhibitor (WTAI) and the rye dimeric alpha-amylase inhibitor (RDAI-1). Not inhibited by alpha-amylase inhibitor from barley. In terms of biological role, aids in the digestion of starch and glycogen derived from food, such as skin scales, fungi and bacteria. The polypeptide is Alpha-amylase (Dermatophagoides pteronyssinus (European house dust mite)).